The sequence spans 979 residues: Probable serine/threonine-protein kinase iksA (979 aa).

N-linked (GlcNAc...) asparagine glycosylation is found at Asn-32, Asn-110, Asn-120, Asn-121, Asn-147, Asn-155, Asn-161, Asn-220, Asn-231, and Asn-243. The segment at 207–245 (SKSGVNNNNNNNNNDSTTTNNNNNNNTTPPQQQQQQNSS) is disordered. A compositionally biased stretch (low complexity) spans 212–244 (NNNNNNNNNDSTTTNNNNNNNTTPPQQQQQQNS). One can recognise a Protein kinase domain in the interval 261–568 (FKEDIKIGSG…ISQILSTHFI (308 aa)). Residues 267 to 275 (IGSGGFGSV) and Lys-293 contribute to the ATP site. Residue Asp-397 is the Proton acceptor of the active site. N-linked (GlcNAc...) asparagine glycans are attached at residues Asn-592, Asn-597, Asn-615, Asn-645, Asn-646, Asn-663, and Asn-699. The segment covering 593–602 (TSVHNTTAST) has biased composition (polar residues). The tract at residues 593-666 (TSVHNTTAST…LGNNNNNNTN (74 aa)) is disordered. Residues 610–666 (SISTTNSTTSSSSSTATSSSLSSTTIATTSSSNAINNTTATTTTNSNLGNNNNNNTN) show a composition bias toward low complexity. Residues 713-727 (NDDIIIDDDDDDDDS) show a composition bias toward acidic residues. Residues 713 to 793 (NDDIIIDDDD…GNNGIRKALP (81 aa)) are disordered. 2 stretches are compositionally biased toward low complexity: residues 728-737 (TNNNDTNNTD) and 753-773 (NNKK…SSNK). Residues Asn-731 and Asn-734 are each glycosylated (N-linked (GlcNAc...) asparagine). A helical membrane pass occupies residues 846-866 (FPSPILLYPLLLLSLIPILVV). N-linked (GlcNAc...) asparagine glycosylation is found at Asn-870 and Asn-894. The next 2 helical transmembrane spans lie at 912–932 (INTI…VLLP) and 956–976 (FPLL…IFIF).

It belongs to the protein kinase superfamily. Ser/Thr protein kinase family.

Its subcellular location is the membrane. It carries out the reaction L-seryl-[protein] + ATP = O-phospho-L-seryl-[protein] + ADP + H(+). The catalysed reaction is L-threonyl-[protein] + ATP = O-phospho-L-threonyl-[protein] + ADP + H(+). The polypeptide is Probable serine/threonine-protein kinase iksA (iksA) (Dictyostelium discoideum (Social amoeba)).